Consider the following 491-residue polypeptide: Cysteine--tRNA ligase (491 aa).

Zn(2+) is bound at residue Cys-31. Residues 33–43 (PTVYGDAHLGH) carry the 'HIGH' region motif. Zn(2+) is bound by residues Cys-226, His-251, and Glu-255. Residues 283-287 (KMGKS) carry the 'KMSKS' region motif. Lys-286 is an ATP binding site.

This sequence belongs to the class-I aminoacyl-tRNA synthetase family. In terms of assembly, monomer. It depends on Zn(2+) as a cofactor.

The protein localises to the cytoplasm. The catalysed reaction is tRNA(Cys) + L-cysteine + ATP = L-cysteinyl-tRNA(Cys) + AMP + diphosphate. This chain is Cysteine--tRNA ligase, found in Bacteroides fragilis (strain ATCC 25285 / DSM 2151 / CCUG 4856 / JCM 11019 / LMG 10263 / NCTC 9343 / Onslow / VPI 2553 / EN-2).